The primary structure comprises 305 residues: tRNA dimethylallyltransferase (305 aa).

8-15 (GPTGTGKS) lines the ATP pocket. Residue 10-15 (TGTGKS) coordinates substrate.

This sequence belongs to the IPP transferase family. As to quaternary structure, monomer. It depends on Mg(2+) as a cofactor.

It catalyses the reaction adenosine(37) in tRNA + dimethylallyl diphosphate = N(6)-dimethylallyladenosine(37) in tRNA + diphosphate. Catalyzes the transfer of a dimethylallyl group onto the adenine at position 37 in tRNAs that read codons beginning with uridine, leading to the formation of N6-(dimethylallyl)adenosine (i(6)A). The polypeptide is tRNA dimethylallyltransferase (Mycobacterium sp. (strain KMS)).